Reading from the N-terminus, the 408-residue chain is LL-diaminopimelate aminotransferase (408 aa).

Substrate-binding residues include Y15 and G42. Pyridoxal 5'-phosphate is bound by residues Y72, 108–109, Y132, N187, Y218, and 246–248; these read SK and SFS. 3 residues coordinate substrate: K109, Y132, and N187. K249 carries the N6-(pyridoxal phosphate)lysine modification. Pyridoxal 5'-phosphate is bound by residues R257 and N292. 2 residues coordinate substrate: N292 and R388.

This sequence belongs to the class-I pyridoxal-phosphate-dependent aminotransferase family. LL-diaminopimelate aminotransferase subfamily. Homodimer. It depends on pyridoxal 5'-phosphate as a cofactor.

The catalysed reaction is (2S,6S)-2,6-diaminopimelate + 2-oxoglutarate = (S)-2,3,4,5-tetrahydrodipicolinate + L-glutamate + H2O + H(+). Its pathway is amino-acid biosynthesis; L-lysine biosynthesis via DAP pathway; LL-2,6-diaminopimelate from (S)-tetrahydrodipicolinate (aminotransferase route): step 1/1. In terms of biological role, involved in the synthesis of meso-diaminopimelate (m-DAP or DL-DAP), required for both lysine and peptidoglycan biosynthesis. Catalyzes the direct conversion of tetrahydrodipicolinate to LL-diaminopimelate. This Parasynechococcus marenigrum (strain WH8102) protein is LL-diaminopimelate aminotransferase.